Consider the following 319-residue polypeptide: Dehydrogenase/reductase SDR family member 9 (319 aa).

The N-terminal stretch at 1–20 (MLLWVLALLFLCAFLWNYKG) is a signal peptide. NAD(+)-binding positions include 34–58 (ITGC…RVIA) and D83. Residue S164 coordinates substrate. Y176 serves as the catalytic Proton acceptor. K180 provides a ligand contact to NAD(+).

Belongs to the short-chain dehydrogenases/reductases (SDR) family. As to quaternary structure, homotetramer. Highly expressed in epithelium of estrus uterus.

It localises to the microsome membrane. Its subcellular location is the endoplasmic reticulum membrane. It carries out the reaction 3beta-hydroxy-5alpha-pregnane-20-one + NAD(+) = 5alpha-pregnane-3,20-dione + NADH + H(+). The catalysed reaction is 17beta-hydroxy-5alpha-androstan-3-one + NAD(+) = 5alpha-androstan-3,17-dione + NADH + H(+). The enzyme catalyses androsterone + NAD(+) = 5alpha-androstan-3,17-dione + NADH + H(+). It catalyses the reaction 5alpha-androstane-3alpha,17beta-diol + NAD(+) = 17beta-hydroxy-5alpha-androstan-3-one + NADH + H(+). It carries out the reaction all-trans-retinol + NAD(+) = all-trans-retinal + NADH + H(+). The catalysed reaction is 3alpha-hydroxy-5alpha-pregnan-20-one + NAD(+) = 5alpha-pregnane-3,20-dione + NADH + H(+). 3-alpha-hydroxysteroid dehydrogenase that converts 3-alpha-tetrahydroprogesterone (allopregnanolone) to dihydroxyprogesterone and 3-alpha-androstanediol to dihydroxyprogesterone. Plays also role in the biosynthesis of retinoic acid from retinaldehyde. Can utilize both NADH and NADPH. The polypeptide is Dehydrogenase/reductase SDR family member 9 (Dhrs9) (Rattus norvegicus (Rat)).